A 162-amino-acid chain; its full sequence is MNTTRHRLLATASRFVETLESLDVDAMLAIRSSTCLHHMCCPSFRNYSITNDQTREAFPQWKATITKYKFGVLDDSQILVDEQARKVMIHAETAAETTVGDYNNEYVFILRMAEDCNTVDEIWEFYDTIRLQDLRHRLEASHVPIGVDAPAPFTTTASPAAL.

Belongs to the trt14 isomerase family. Homodimer.

It functions in the pathway secondary metabolite biosynthesis; terpenoid biosynthesis. Functionally, part of the gene cluster B that mediates the biosynthesis of austinol and dehydroaustinol, two fungal meroterpenoids. The first step of the pathway is the synthesis of 3,5-dimethylorsellinic acid by the polyketide synthase ausA. 3,5-dimethylorsellinic acid is then prenylated by the polyprenyl transferase ausN. Further epoxidation by the FAD-dependent monooxygenase ausM and cyclization by the probable terpene cyclase ausL lead to the formation of protoaustinoid A. Protoaustinoid A is then oxidized to spiro-lactone preaustinoid A3 by the combined action of the FAD-binding monooxygenases ausB and ausC, and the dioxygenase ausE. Acid-catalyzed keto-rearrangement and ring contraction of the tetraketide portion of preaustinoid A3 by ausJ lead to the formation of preaustinoid A4. The aldo-keto reductase ausK, with the help of ausH, is involved in the next step by transforming preaustinoid A4 into isoaustinone which is in turn hydroxylated by the P450 monooxygenase ausI to form austinolide. Finally, the cytochrome P450 monooxygenase ausG modifies austinolide to austinol. Austinol can be further modified to dehydroaustinol which forms a diffusible complex with diorcinol that initiates conidiation. Due to genetic rearrangements of the clusters and the subsequent loss of some enzymes, the end products of the Emericella nidulans austinoid biosynthesis clusters are austinol and dehydroaustinol, even if additional enzymes, such as the O-acetyltransferase ausQ and the cytochrome P450 monooxygenase ausR are still functional. This is Austinoid biosynthesis clusters protein J from Emericella nidulans (strain FGSC A4 / ATCC 38163 / CBS 112.46 / NRRL 194 / M139) (Aspergillus nidulans).